Reading from the N-terminus, the 282-residue chain is Uridylate-specific endoribonuclease B (282 aa).

The region spanning 4-278 is the EndoU domain; that stretch reads GDRELSALIQ…IGTTYPVPVK (275 aa). Residues His-156, His-172, and Lys-218 contribute to the active site.

This sequence belongs to the ENDOU family. As to quaternary structure, monomer. It depends on Mn(2+) as a cofactor.

The catalysed reaction is ribonucleotidyl-uridine-RNA = a 5'-end dephospho-uridine-RNA + a 3'-end 2',3'-cyclophospho-ribonucleotide-RNA. Its function is as follows. Endoribonuclease that cleaves single-stranded RNAs at 5' of uridylates and releases a product with a 2',3'-cyclic phosphate at the 3'-end. The UU and GU sites are more efficiently cleaved than CU and AU sites. This Danio rerio (Zebrafish) protein is Uridylate-specific endoribonuclease B (endoub).